Reading from the N-terminus, the 382-residue chain is Serine protease 43 (382 aa).

Residues 1-27 (MGGFCGADRGGFLALLVWLQLLQPLFS) form the signal peptide. Positions 30 to 97 (YKPREDSGVM…SGTTTKITLE (68 aa)) are disordered. Polar residues-rich tracts occupy residues 56–68 (AQQSRLKSLSISH) and 85–95 (GSPSGTTTKIT). Residues 119–355 (VDPGSLSAGR…YNEWVSYVLS (237 aa)) form the Peptidase S1 domain. Cysteines 144 and 160 form a disulfide. Catalysis depends on charge relay system residues His159 and Asp205. 3 cysteine pairs are disulfide-bonded: Cys239–Cys313, Cys272–Cys293, and Cys303–Cys331. Ser307 acts as the Charge relay system in catalysis. Residues 362-382 (PMGVLVLYLSLVFPLALLVAL) form a helical membrane-spanning segment.

This sequence belongs to the peptidase S1 family. Testis-specific. Expressed in germ cells at the stages from late pachytene spermatocytes to spermatids.

It is found in the cell membrane. Functionally, plays a role in spermatogenesis. Involved in germ cell survival during meiosis. Lacks protease activity in vitro. This chain is Serine protease 43, found in Mus musculus (Mouse).